The following is a 318-amino-acid chain: Transaldolase (318 aa).

The Schiff-base intermediate with substrate role is filled by Lys-132.

Belongs to the transaldolase family. Type 1 subfamily. In terms of assembly, homodimer.

It localises to the cytoplasm. The catalysed reaction is D-sedoheptulose 7-phosphate + D-glyceraldehyde 3-phosphate = D-erythrose 4-phosphate + beta-D-fructose 6-phosphate. The protein operates within carbohydrate degradation; pentose phosphate pathway; D-glyceraldehyde 3-phosphate and beta-D-fructose 6-phosphate from D-ribose 5-phosphate and D-xylulose 5-phosphate (non-oxidative stage): step 2/3. Its function is as follows. Transaldolase is important for the balance of metabolites in the pentose-phosphate pathway. This Shewanella piezotolerans (strain WP3 / JCM 13877) protein is Transaldolase.